Here is a 326-residue protein sequence, read N- to C-terminus: Cobalamin biosynthesis protein CobD (326 aa).

Transmembrane regions (helical) follow at residues 58 to 78, 81 to 101, 157 to 177, and 304 to 324; these read MRGV…GVVL, LFDV…AVFL, FSDG…PGLL, and VFYR…LPFL.

Belongs to the CobD/CbiB family.

Its subcellular location is the cell membrane. It functions in the pathway cofactor biosynthesis; adenosylcobalamin biosynthesis. In terms of biological role, converts cobyric acid to cobinamide by the addition of aminopropanol on the F carboxylic group. This is Cobalamin biosynthesis protein CobD from Sinorhizobium fredii (strain NBRC 101917 / NGR234).